The chain runs to 214 residues: MQLFHLCLIISCTCPTVQASKLCLGWLWGMDIDPYKEFGATVELLSFLPSDFFPSVRDLLDTASALYREALESPEHCSPHHTALRQAILCWGELMTLATWVGNNLEDPASRDLVVNYVNTNVGLKIRQLLWFHISCLTFGRETVLEYLVSFGVWIRTPPAYRPPNAPILSTLPETTVVRRRDRGRSPRRRTPSPRRRRSPSPRRRRSQSRESQC.

Positions 1–19 are cleaved as a signal peptide; that stretch reads MQLFHLCLIISCTCPTVQA. Residues 25-27 are HBEAG; that stretch reads GWL. Positions 165-214 are disordered; it reads NAPILSTLPETTVVRRRDRGRSPRRRTPSPRRRRSPSPRRRRSQSRESQC. Residues 178-207 are compositionally biased toward basic residues; that stretch reads VRRRDRGRSPRRRTPSPRRRRSPSPRRRRS. Residues 186–192 form a 1; half-length repeat; that stretch reads SPRRRTP. The segment at 186–208 is 3 X 8 AA repeats of S-P-R-R-R-R-S-[PQ]; the sequence is SPRRRTPSPRRRRSPSPRRRRSQ. A propeptide spanning residues 186 to 214 is cleaved from the precursor; it reads SPRRRTPSPRRRRSPSPRRRRSQSRESQC. A run of 2 repeats spans residues 193–200 and 201–208.

It belongs to the orthohepadnavirus precore antigen family. In terms of assembly, homodimerizes. In terms of processing, phosphorylated. Cleaved by host furin.

The protein resides in the secreted. Its subcellular location is the host nucleus. Its function is as follows. May regulate immune response to the intracellular capsid in acting as a T-cell tolerogen, by having an immunoregulatory effect which prevents destruction of infected cells by cytotoxic T-cells. This immune regulation may predispose to chronicity during perinatal infections and prevent severe liver injury during adult infections. The polypeptide is External core antigen (Hepatitis B virus genotype A2 subtype adw2 (strain Rutter 1979) (HBV-A)).